The sequence spans 179 residues: MFFLAAEGGETSHSPILPVWQEIVVGLVAFGLLAFVLMKFVFPRMEQTFQARVDAIEGGIKRAEAAQAEANQLLEQYRAQLSEARSDAAKIRDDARADAEGIRQDILAKAREESDRIIAAGKEQLVAERATIVRELRTEVGTLAVDLASKIVGESLADEARRAGTVDRFLDGLESAGAR.

A helical transmembrane segment spans residues 23-43 (IVVGLVAFGLLAFVLMKFVFP).

The protein belongs to the ATPase B chain family. F-type ATPases have 2 components, F(1) - the catalytic core - and F(0) - the membrane proton channel. F(1) has five subunits: alpha(3), beta(3), gamma(1), delta(1), epsilon(1). F(0) has three main subunits: a(1), b(2) and c(10-14). The alpha and beta chains form an alternating ring which encloses part of the gamma chain. F(1) is attached to F(0) by a central stalk formed by the gamma and epsilon chains, while a peripheral stalk is formed by the delta and b chains.

Its subcellular location is the cell membrane. Its function is as follows. F(1)F(0) ATP synthase produces ATP from ADP in the presence of a proton or sodium gradient. F-type ATPases consist of two structural domains, F(1) containing the extramembraneous catalytic core and F(0) containing the membrane proton channel, linked together by a central stalk and a peripheral stalk. During catalysis, ATP synthesis in the catalytic domain of F(1) is coupled via a rotary mechanism of the central stalk subunits to proton translocation. In terms of biological role, component of the F(0) channel, it forms part of the peripheral stalk, linking F(1) to F(0). This chain is ATP synthase subunit b, found in Salinispora arenicola (strain CNS-205).